A 501-amino-acid chain; its full sequence is Glycerol kinase (501 aa).

Position 12 (Thr12) interacts with ADP. 3 residues coordinate ATP: Thr12, Thr13, and Ser14. Thr12 contacts sn-glycerol 3-phosphate. ADP is bound at residue Arg16. Positions 82, 83, 134, and 244 each coordinate sn-glycerol 3-phosphate. 5 residues coordinate glycerol: Arg82, Glu83, Tyr134, Asp244, and Gln245. Residues Thr266 and Gly310 each contribute to the ADP site. The ATP site is built by Thr266, Gly310, Gln314, and Gly411. Positions 411 and 415 each coordinate ADP.

This sequence belongs to the FGGY kinase family.

The catalysed reaction is glycerol + ATP = sn-glycerol 3-phosphate + ADP + H(+). Its pathway is polyol metabolism; glycerol degradation via glycerol kinase pathway; sn-glycerol 3-phosphate from glycerol: step 1/1. Its activity is regulated as follows. Inhibited by fructose 1,6-bisphosphate (FBP). Key enzyme in the regulation of glycerol uptake and metabolism. Catalyzes the phosphorylation of glycerol to yield sn-glycerol 3-phosphate. This is Glycerol kinase from Methylorubrum extorquens (strain PA1) (Methylobacterium extorquens).